A 308-amino-acid polypeptide reads, in one-letter code: Cytochrome b (308 aa).

Helical transmembrane passes span 1 to 21 (FGLL…LLAA), 45 to 66 (WLIR…YLHI), 81 to 101 (WNIG…GYVX), and 146 to 166 (FFAL…VHLT). Heme b is bound by residues His51 and His65. His150 and His164 together coordinate heme b. His169 contacts a ubiquinone. 3 helical membrane passes run 194–214 (TKDV…ALFS), 256–276 (LGGV…PFLH), and 288–308 (LSQI…WVSN).

This sequence belongs to the cytochrome b family. In terms of assembly, the cytochrome bc1 complex contains 11 subunits: 3 respiratory subunits (MT-CYB, CYC1 and UQCRFS1), 2 core proteins (UQCRC1 and UQCRC2) and 6 low-molecular weight proteins (UQCRH/QCR6, UQCRB/QCR7, UQCRQ/QCR8, UQCR10/QCR9, UQCR11/QCR10 and a cleavage product of UQCRFS1). This cytochrome bc1 complex then forms a dimer. The cofactor is heme b.

The protein resides in the mitochondrion inner membrane. Its function is as follows. Component of the ubiquinol-cytochrome c reductase complex (complex III or cytochrome b-c1 complex) that is part of the mitochondrial respiratory chain. The b-c1 complex mediates electron transfer from ubiquinol to cytochrome c. Contributes to the generation of a proton gradient across the mitochondrial membrane that is then used for ATP synthesis. This Pomatostomus ruficeps (Chestnut-crowned babbler) protein is Cytochrome b (MT-CYB).